Reading from the N-terminus, the 146-residue chain is Hemoglobin subunit beta (146 aa).

Residue Val1 is modified to N-acetylvaline. The 145-residue stretch at 2–146 folds into the Globin domain; that stretch reads HLTGEEKAAV…VANALAHKYH (145 aa). Thr12 is subject to Phosphothreonine. The residue at position 44 (Ser44) is a Phosphoserine. Lys59 carries the post-translational modification N6-acetyllysine. His63 contributes to the heme b binding site. An N6-acetyllysine modification is found at Lys82. His92 contacts heme b. The residue at position 93 (Cys93) is an S-nitrosocysteine. N6-acetyllysine is present on Lys144.

Belongs to the globin family. As to quaternary structure, heterotetramer of two alpha chains and two beta chains. In terms of tissue distribution, red blood cells.

Involved in oxygen transport from the lung to the various peripheral tissues. This Aotus trivirgatus (Three-striped night monkey) protein is Hemoglobin subunit beta (HBB).